We begin with the raw amino-acid sequence, 183 residues long: NAD(P)H-quinone oxidoreductase subunit I, chloroplastic (183 aa).

2 consecutive 4Fe-4S ferredoxin-type domains span residues 55-84 and 95-124; these read GRIHFEFDKCIACEVCVRVCPINLPVVDWE and KNYSIDFGVCIFCGNCVEYCPTNCLSMTEE. 8 residues coordinate [4Fe-4S] cluster: Cys-64, Cys-67, Cys-70, Cys-74, Cys-104, Cys-107, Cys-110, and Cys-114.

Belongs to the complex I 23 kDa subunit family. NDH is composed of at least 16 different subunits, 5 of which are encoded in the nucleus. [4Fe-4S] cluster serves as cofactor.

The protein resides in the plastid. It is found in the chloroplast thylakoid membrane. It catalyses the reaction a plastoquinone + NADH + (n+1) H(+)(in) = a plastoquinol + NAD(+) + n H(+)(out). The catalysed reaction is a plastoquinone + NADPH + (n+1) H(+)(in) = a plastoquinol + NADP(+) + n H(+)(out). NDH shuttles electrons from NAD(P)H:plastoquinone, via FMN and iron-sulfur (Fe-S) centers, to quinones in the photosynthetic chain and possibly in a chloroplast respiratory chain. The immediate electron acceptor for the enzyme in this species is believed to be plastoquinone. Couples the redox reaction to proton translocation, and thus conserves the redox energy in a proton gradient. This chain is NAD(P)H-quinone oxidoreductase subunit I, chloroplastic, found in Marchantia polymorpha (Common liverwort).